We begin with the raw amino-acid sequence, 520 residues long: Versicolorin B desaturase (520 aa).

A helical transmembrane segment spans residues Ile22–Ile42. Asn266 and Asn426 each carry an N-linked (GlcNAc...) asparagine glycan. Residue Cys462 coordinates heme.

The protein belongs to the cytochrome P450 family. Heme serves as cofactor.

The protein localises to the membrane. It catalyses the reaction versicolorin B + NADPH + O2 + H(+) = versicolorin A + NADP(+) + 2 H2O. It participates in mycotoxin biosynthesis. Functionally, versicolorin B desaturase; part of the fragmented gene cluster that mediates the biosynthesis of dothistromin (DOTH), a polyketide toxin very similar in structure to the aflatoxin precursor, versicolorin B. The first step of the pathway is the conversion of acetate to norsolorinic acid (NOR) and requires the fatty acid synthase subunits hexA and hexB, as well as the polyketide synthase pksA. PksA combines a hexanoyl starter unit and 7 malonyl-CoA extender units to synthesize the precursor NOR. The hexanoyl starter unit is provided to the acyl-carrier protein (ACP) domain by the fungal fatty acid synthase hexA/hexB. The second step is the conversion of NOR to averantin (AVN) and requires the norsolorinic acid ketoreductase nor1, which catalyzes the dehydration of norsolorinic acid to form (1'S)-averantin. The cytochrome P450 monooxygenase avnA then catalyzes the hydroxylation of AVN to 5'hydroxyaverantin (HAVN). The next step is performed by adhA that transforms HAVN to averufin (AVF). Averufin might then be converted to hydroxyversicolorone by cypX and avfA. Hydroxyversicolorone is further converted versiconal hemiacetal acetate (VHA) by moxY. VHA is then the substrate for the versiconal hemiacetal acetate esterase est1 to yield versiconal (VAL). Versicolorin B synthase vbsA then converts VAL to versicolorin B (VERB) by closing the bisfuran ring. Then, the activity of the versicolorin B desaturase verB leads to versicolorin A (VERA). DotB, a predicted chloroperoxidase, may perform epoxidation of the A-ring of VERA. Alternatively, a cytochrome P450, such as cypX or avnA could catalyze this step. It is also possible that another, uncharacterized, cytochrome P450 enzyme is responsible for this step. Opening of the epoxide could potentially be achieved by the epoxide hydrolase epoA. However, epoA seems not to be required for DOTH biosynthesis, but other epoxide hydrolases may have the ability to complement this hydrolysis. Alternatively, opening of the epoxide ring could be achieved non-enzymatically. The next step is the deoxygenation of ring A to yield the 5,8-dihydroxyanthraquinone which is most likely catalyzed by the NADPH dehydrogenase encoded by ver1. The last stages of DOTH biosynthesis are proposed to involve hydroxylation of the bisfuran. OrdB and norB might have oxidative roles here. An alternative possibility is that cytochrome P450 monoogenases such as avnA and cypX might perform these steps in addition to previously proposed steps. In Dothistroma septosporum (strain NZE10 / CBS 128990) (Red band needle blight fungus), this protein is Versicolorin B desaturase.